A 305-amino-acid polypeptide reads, in one-letter code: MELIFLGTSAGVPTRTRNVTAILLNLQHPTQSGLWLFDCGEGTQHQLLHTAFNPGKLDKIFISHLHGDHLFGLPGLLCSRSMSGIIQPLTIYGPQGIREFVETALRISGSWTDYPLEIVEIGAGEILDDGLRKVTAYPLEHPLECYGYRIEEHDKPGALNAQALKAAGVPPGPLFQELKAGKTIMLEDGRQINGADYLAAPVPGKALAIFGDTGPCDAALDLAKGVDVMVHEATLDITMEAKANSRGHSSTRQAATLAREAGVGKLIITHVSSRYDDKGCQHLLRECRSIFPATELANDFTVFNV.

Positions 64, 66, 68, 69, 141, 212, and 270 each coordinate Zn(2+). D68 functions as the Proton acceptor in the catalytic mechanism.

This sequence belongs to the RNase Z family. RNase BN subfamily. Homodimer. It depends on Zn(2+) as a cofactor.

In terms of biological role, zinc phosphodiesterase, which has both exoribonuclease and endoribonuclease activities. The polypeptide is Ribonuclease BN (Shigella boydii serotype 18 (strain CDC 3083-94 / BS512)).